The chain runs to 327 residues: GMP reductase (327 aa).

Cys-175 serves as the catalytic Thioimidate intermediate. 204–227 (IIADGGIRTHGDIAKSIRFGASMV) is an NADP(+) binding site.

This sequence belongs to the IMPDH/GMPR family. GuaC type 2 subfamily.

The enzyme catalyses IMP + NH4(+) + NADP(+) = GMP + NADPH + 2 H(+). Catalyzes the irreversible NADPH-dependent deamination of GMP to IMP. It functions in the conversion of nucleobase, nucleoside and nucleotide derivatives of G to A nucleotides, and in maintaining the intracellular balance of A and G nucleotides. This Oceanobacillus iheyensis (strain DSM 14371 / CIP 107618 / JCM 11309 / KCTC 3954 / HTE831) protein is GMP reductase.